The sequence spans 510 residues: MLWIKNLARISQTTSSSVGNVFRNPESYTLSSRFCTALQKQQVTDTVQAKEDVVNALEPQRYDGLAPTKEGEKPRVLVLGSGWAGCRVLKGIDTSIYDVVCVSPRNHMVFTPLLASTCVGTLEFRSVAEPISRIQPAISREPGSYYFLANCSKLDADNHEVHCETVTEGSSTLKPWKFKIAYDKLVLACGAEASTFGINGVLENAIFLREVHHAQEIRRKLLLNLMLSEVPGIGEDEKKRLLHCVVVGGGPTGVEFSGELSDFIMKDVRQRYSHVKDDIRVTLIEARDILSSFDDRLRHYAIKQLNKSGVKLVRGIVKEVKPQKLILDDGTEVPYGPLVWSTGVGPSSFVRSLDFPKDPGGRIGIDEWMRVPSVQDVFAIGDCSGYLESTGKSTLPALAQVAEREGKYLANLFNVMGKAGGGRANSAKEMELGEPFVYKHLGSMATIGRYKALVDLRESKEGKGISMAGFLSWFIWRSAYLTRVVSWRNRFYVAINWLTTFVFGRDISRI.

The N-terminal 48 residues, 1–48, are a transit peptide targeting the mitochondrion; it reads MLWIKNLARISQTTSSSVGNVFRNPESYTLSSRFCTALQKQQVTDTVQ. 75 to 105 lines the FAD pocket; the sequence is RVLVLGSGWAGCRVLKGIDTSIYDVVCVSPR. NAD(+) is bound at residue 242 to 278; the sequence is LHCVVVGGGPTGVEFSGELSDFIMKDVRQRYSHVKDD. The Microbody targeting signal motif lies at 501 to 510; that stretch reads FVFGRDISRI.

It belongs to the NADH dehydrogenase family. FAD is required as a cofactor. In terms of tissue distribution, expressed in seedlings, cotyledons, young leaves, stems and flowers and, to a lower extent, in roots and buds.

It is found in the mitochondrion inner membrane. Its subcellular location is the peroxisome. It carries out the reaction a quinone + NADH + H(+) = a quinol + NAD(+). It catalyses the reaction a ubiquinone + NADH + H(+) = a ubiquinol + NAD(+). Functionally, alternative NADH-ubiquinone oxidoreductase which catalyzes the oxidation of mitochondrial NADH does not translocate protons across the inner mitochondrial membrane. The sequence is that of Internal alternative NAD(P)H-ubiquinone oxidoreductase A1, mitochondrial (NDA1) from Arabidopsis thaliana (Mouse-ear cress).